Consider the following 188-residue polypeptide: Pro-adrenomedullin (188 aa).

An N-terminal signal peptide occupies residues 1–21 (MKLVPVALLYLGSLAFLGADT). R41 is modified (arginine amide). A propeptide spanning residues 45–92 (ELRVSSSYPTGLAEVKAGPAQTLIRTQDVKGASRNPQTSGPDAARIRV) is cleaved from the precursor. A disulfide bond links C110 and C115. The tract at residues 131 to 176 (DKDGVAPRSKISPQGYGRRRRRSLPEPGLRRTLLFPEPRPGGAPAP) is disordered. Y146 carries the post-translational modification Tyrosine amide. Residues 153–188 (SLPEPGLRRTLLFPEPRPGGAPAPRAHQVLANLLKM) constitute a propeptide, preproAM C-terminal fragment.

The protein belongs to the adrenomedullin family.

It is found in the secreted. Functionally, adrenomedullin/ADM and proadrenomedullin N-20 terminal peptide/PAMP are peptide hormones that act as potent hypotensive and vasodilatator agents. Numerous actions have been reported most related to the physiologic control of fluid and electrolyte homeostasis. ADM function is mediated by the CALCRL-RAMP2 and CALCRL-RAMP3 receptor complexes with ADM showing the highest potency for the CALCRL-RAMP2 complex. The sequence is that of Pro-adrenomedullin (ADM) from Canis lupus familiaris (Dog).